Reading from the N-terminus, the 377-residue chain is MSEEDSDSVITDSQAEEEGELPVIQLCGLVEELSYGNSALKTETEMFEKYYSRLEPRDHRMTRLSDIKITAAEFSQLRSRRKSKARGGLDRTLGLTVEQKLELVQKELEDTRDEIRHMRANAERDLQHHEAIIEEADIRWNEVQKAVHEFEKDILKTISKKKGSILATQKVMKYIEDMNRRRDNIKDKLCLKNVSLKVQRKKMLSQLRQKEEVGEALHDVDFQQLKIENAQFLETIEARNKELIQLKLASGNTLQVLNTYKNKLHRAMEIYVNLDKEILLRNELLGKIEKETIQAEEDRAKAHILNDKLRKQLAEFRAPQVMMYVKEKILNGELEKTIKMWERKVEIAEMSLKGYRKAWNKMKTSDEQLQIIRPPGK.

Coiled-coil stretches lie at residues Leu95–Arg139 and Gln169–Tyr355.

Belongs to the CFAP263 family. Forms a complex with CFAP184; the interaction is required for functional activity in cilia. Interacts with HAP1 and PCM1.

Its subcellular location is the cytoplasm. The protein resides in the cytoskeleton. It localises to the microtubule organizing center. The protein localises to the centrosome. It is found in the centriolar satellite. Its subcellular location is the cell projection. The protein resides in the cilium. Functionally, component of centriolar satellites contributing to primary cilium formation. In complex with CFAP263, acts as a regulator of ciliary beating that connects radial spoke 3 (RS3) to the inner dynein arm (IDA) and the nexin-dynein regulatory complex (N-DRC). The complex is positioned parallel to N-DRC and forms a connection between the arch at the base of RS3, the IDA tail and N-DRC. The protein is Cilia- and flagella-associated protein 263 (Cfap263) of Mus musculus (Mouse).